We begin with the raw amino-acid sequence, 175 residues long: Bifunctional protein PyrR (175 aa).

Residues 97–109 (IVLIDDVLFTGRT) carry the PRPP-binding motif.

It belongs to the purine/pyrimidine phosphoribosyltransferase family. PyrR subfamily. In terms of assembly, homodimer and homohexamer; in equilibrium.

It catalyses the reaction UMP + diphosphate = 5-phospho-alpha-D-ribose 1-diphosphate + uracil. In terms of biological role, regulates transcriptional attenuation of the pyrimidine nucleotide (pyr) operon by binding in a uridine-dependent manner to specific sites on pyr mRNA. This disrupts an antiterminator hairpin in the RNA and favors formation of a downstream transcription terminator, leading to a reduced expression of downstream genes. Also displays a weak uracil phosphoribosyltransferase activity which is not physiologically significant. This chain is Bifunctional protein PyrR, found in Leuconostoc citreum (strain KM20).